Reading from the N-terminus, the 110-residue chain is UPF0060 membrane protein Psyr_3752 (110 aa).

Transmembrane regions (helical) follow at residues 5–25 (LWFF…WLWL), 28–48 (GKSA…ALLL), 59–79 (AYAA…GLVE), and 84–104 (LGTD…ILLG).

This sequence belongs to the UPF0060 family.

Its subcellular location is the cell inner membrane. The chain is UPF0060 membrane protein Psyr_3752 from Pseudomonas syringae pv. syringae (strain B728a).